We begin with the raw amino-acid sequence, 347 residues long: NADH-ubiquinone oxidoreductase chain 2 (347 aa).

The next 10 helical transmembrane spans lie at 13-33 (IFTGTLITALSSHWFFTWVGL), 60-80 (FLTQATASMILLMAILSNSML), 96-116 (LMIMMAMAMKLGMAPFHFWVP), 123-143 (PLMSGLLLLTWQKLAPISIMY), 149-169 (LNVNLLLTLSILSIMAGSWGG), 178-198 (ILAYSSITHMGWMMAVLPYNP), 201-221 (TILNLTIYIILTTTAFLLLNL), 247-267 (TLLSLGGLPPLTGFLPKWVII), 274-294 (NSLIIPTIMAIITLLNLYFYL), and 326-346 (LPTLITLTTLLLPISPFMLMI).

The protein belongs to the complex I subunit 2 family. As to quaternary structure, core subunit of respiratory chain NADH dehydrogenase (Complex I) which is composed of 45 different subunits. Interacts with TMEM242.

Its subcellular location is the mitochondrion inner membrane. It carries out the reaction a ubiquinone + NADH + 5 H(+)(in) = a ubiquinol + NAD(+) + 4 H(+)(out). Core subunit of the mitochondrial membrane respiratory chain NADH dehydrogenase (Complex I) which catalyzes electron transfer from NADH through the respiratory chain, using ubiquinone as an electron acceptor. Essential for the catalytic activity and assembly of complex I. In Pan troglodytes (Chimpanzee), this protein is NADH-ubiquinone oxidoreductase chain 2.